Here is a 122-residue protein sequence, read N- to C-terminus: Large ribosomal subunit protein uL18 (122 aa).

It belongs to the universal ribosomal protein uL18 family. Part of the 50S ribosomal subunit; part of the 5S rRNA/L5/L18/L25 subcomplex. Contacts the 5S and 23S rRNAs.

In terms of biological role, this is one of the proteins that bind and probably mediate the attachment of the 5S RNA into the large ribosomal subunit, where it forms part of the central protuberance. This chain is Large ribosomal subunit protein uL18, found in Petrotoga mobilis (strain DSM 10674 / SJ95).